The sequence spans 374 residues: DNA-directed RNA polymerase subunit alpha (374 aa).

An alpha N-terminal domain (alpha-NTD) region spans residues 1 to 270 (MIFDEDSSSV…DQFQQFINFD (270 aa)). The tract at residues 282 to 374 (KDVLPYDSNL…ESLSKQYSEE (93 aa)) is alpha C-terminal domain (alpha-CTD).

The protein belongs to the RNA polymerase alpha chain family. In terms of assembly, homodimer. The RNAP catalytic core consists of 2 alpha, 1 beta, 1 beta' and 1 omega subunit. When a sigma factor is associated with the core the holoenzyme is formed, which can initiate transcription.

It catalyses the reaction RNA(n) + a ribonucleoside 5'-triphosphate = RNA(n+1) + diphosphate. DNA-dependent RNA polymerase catalyzes the transcription of DNA into RNA using the four ribonucleoside triphosphates as substrates. The protein is DNA-directed RNA polymerase subunit alpha of Ehrlichia ruminantium (strain Welgevonden).